We begin with the raw amino-acid sequence, 598 residues long: F-box/WD repeat-containing protein 8 (598 aa).

Met-1 bears the N-acetylmethionine mark. The tract at residues 20–97 (SQALRRRRRL…PDRDATEPEP (78 aa)) is disordered. The segment covering 29–44 (LEAGERRSPRRPEAGA) has biased composition (basic and acidic residues). Low complexity predominate over residues 51–65 (GYLGLAQGLLEGAGR). Residues 73–93 (RGGDRKDTSSRSRSPPDRDAT) are compositionally biased toward basic and acidic residues. The residue at position 84 (Ser-84) is a Phosphoserine. Ser-86 is modified (phosphoserine; by MTOR). Positions 113–159 (PFFDVRLPYELAINIFQYLNRRELGLCAQVSKTWKVIAEDEVLWYRL) constitute an F-box domain. WD repeat units follow at residues 201–250 (AVSE…LESE), 259–299 (QPYV…FEHD), 300–340 (ARIQ…SEFE), 341–383 (VQKL…LHYV), 384–429 (YGQP…SKLG), 430–475 (NALG…SAHQ), 476–513 (LGVS…EVHS), and 514–561 (RHPV…AYEF).

In terms of assembly, component of the Cul7-RING(FBXW8) complex consisting of CUL7, RBX1, SKP1 and FBXW8; within the complex interacts with CUL7 and SKP1. Interacts with GLMN isoform 1. Interacts with OBSL1, CUL1, CUL2, CCT6B, PFDN5, CCT2, CCT3, CCT6A, CCT7, VBP1, CCDC8, ARF1, TRIP13, PDCD5 and GORASP1. Interacts with MAP4K1/HPK1 (when autophosphorylated). Associated component of the 3M complex. Interacts with POUF51 (when phosphorylated on 'Ser-347'). Post-translationally, phosphorylation at Ser-86 by mTORC2 promotes FBXW8 stabilization, allowing its translocation to the cytosol in response to insulin. In terms of tissue distribution, widely expressed. Expressed at higher level in skeletal muscle, cartilage and lung.

It localises to the cytoplasm. The protein localises to the perinuclear region. It is found in the golgi apparatus. Its subcellular location is the cytosol. The protein operates within protein modification; protein ubiquitination. In terms of biological role, substrate-recognition component of the Cul7-RING(FBXW8) ubiquitin ligase complex, which mediates the ubiquitination and subsequent proteasomal degradation of target proteins. The Cul7-RING(FBXW8) complex mediates ubiquitination and consequent degradation of GORASP1, acting as a component of the ubiquitin ligase pathway that regulates Golgi morphogenesis and dendrite patterning in brain. Mediates ubiquitination and degradation of IRS1 in a mTOR-dependent manner: the Cul7-RING(FBXW8) complex recognizes and binds IRS1 previously phosphorylated by S6 kinase (RPS6KB1 or RPS6KB2). The Cul7-RING(FBXW8) complex also mediates ubiquitination of MAP4K1/HPK1: recognizes and binds autophosphorylated MAP4K1/HPK1, leading to its degradation, thereby affecting cell proliferation and differentiation. The Cul7-RING(FBXW8) complex also mediates ubiquitination of phosphorylated cyclin-D1 (CCND1). The Cul7-RING(FBXW8) complex is however not a major regulator of CCND1 stability during the G1/S transition. Associated component of the 3M complex, suggesting that it mediates some of 3M complex functions. The protein is F-box/WD repeat-containing protein 8 (Fbxw8) of Mus musculus (Mouse).